Reading from the N-terminus, the 249-residue chain is Aquaporin TIP4-1 (249 aa).

M1 bears the N-acetylmethionine mark. Residues 1–20 (MKKIELGHHSEAAKPDCIKA) are Cytoplasmic-facing. K3 bears the N6,N6-dimethyllysine mark. A helical transmembrane segment spans residues 21–41 (LIVEFITTFLFVFAGVGSAMA). Residues 42–49 (TDSLVGNT) are Vacuolar-facing. Residues 50–70 (LVGLFAVAVAHAFVVAVMISA) form a helical membrane-spanning segment. Over 71–105 (GHISGGHLNPAVTLGLLLGGHISVFRAFLYWIDQL) the chain is Cytoplasmic. An NPA 1 motif is present at residues 79–81 (NPA). Residues 106–126 (LASSAACFLLSYLTGGMGTPV) form a helical membrane-spanning segment. At 127 to 137 (HTLASGVSYTQ) the chain is on the vacuolar side. The helical transmembrane segment at 138–158 (GIIWEIILTFSLLFTVYATIV) threads the bilayer. The Cytoplasmic portion of the chain corresponds to 159 to 166 (DPKKGSLD). The helical transmembrane segment at 167–187 (GFGPLLTGFVVGANILAGGAF) threads the bilayer. The Vacuolar segment spans residues 188 to 212 (SGASMNPARSFGPALVSGNWTDHWV). The short motif at 193-195 (NPA) is the NPA 2 element. Residues 213–233 (YWVGPLIGGGLAGFIYENVLI) traverse the membrane as a helical segment. Over 234–249 (DRPHVPVADDEQPLLN) the chain is Cytoplasmic.

Belongs to the MIP/aquaporin (TC 1.A.8) family. TIP (TC 1.A.8.10) subfamily. Expressed in roots.

It localises to the vacuole membrane. Its function is as follows. Aquaporins facilitate the transport of water and small neutral solutes across cell membranes. Transports urea in yeast cells in a pH-independent manner. This Arabidopsis thaliana (Mouse-ear cress) protein is Aquaporin TIP4-1 (TIP4-1).